The primary structure comprises 418 residues: Voltage-gated ClC-type chloride channel ClcB (418 aa).

Helical transmembrane passes span 5-25, 54-74, 146-166, 168-188, 222-242, 258-278, 291-311, 316-336, 352-372, and 380-400; these read LLIATVVGILAAFAVAGFRHA, LLTPALGGLAAGLLLMGWQKF, LWIACGAAAGMAAAYRAPLAG, LFIAEVLFGTMMLASLGPVII, ALIISTGVLAGLCGPLLLTLM, WQLALGGLIVGLLSLFTPAVW, APPLLMIIAGIFLCKLFAVLA, GAPGGVFTPTLFIGLAIGMLY, LLLGLTGMATLLAATTHAPIM, and MTGEYQLLPGLLIACVIASVI.

This sequence belongs to the chloride channel (TC 2.A.49) family. ClcB subfamily.

It is found in the cell inner membrane. Its function is as follows. Probably acts as an electrical shunt for an outwardly-directed proton pump that is linked to amino acid decarboxylation, as part of the extreme acid resistance (XAR) response. The polypeptide is Voltage-gated ClC-type chloride channel ClcB (Escherichia coli O17:K52:H18 (strain UMN026 / ExPEC)).